Reading from the N-terminus, the 426-residue chain is Peptidoglycan DD-endopeptidase ShyB (426 aa).

The first 21 residues, 1-21, serve as a signal peptide directing secretion; that stretch reads MGQFRFLALIVAVLCFSVALF. The segment covering 32–48 has biased composition (polar residues); sequence SYSVPLNQSVNTSQPPS. The disordered stretch occupies residues 32–55; sequence SYSVPLNQSVNTSQPPSSEMVPSD. Residues His291, Asp295, and His372 each coordinate Zn(2+).

The protein belongs to the peptidase M23B family. In terms of assembly, monomer. Zn(2+) serves as cofactor.

The protein resides in the periplasm. It functions in the pathway cell wall degradation; peptidoglycan degradation. With respect to regulation, not inhibited by metal chelator EDTA. Functionally, cell wall peptidoglycan (PG) DD-endopeptidase, which may act as a substitute for other zinc-dependent PG endopeptidases (ShyA and ShyC) during zinc starvation. Hydrolyzes peptide cross-links which covalently connect adjacent PG strands probably to allow insertion of new glycans and thus cell wall expansion. Degrades purified whole PG sacculi in vitro. It is unclear how it is able to function in low zinc environments, but that may possibly be due to binding zinc with very high affinity, utilizing an alternative metal cofactor or that it may function independently of a bound metal cofactor. This is Peptidoglycan DD-endopeptidase ShyB from Vibrio cholerae serotype O1 (strain ATCC 39315 / El Tor Inaba N16961).